We begin with the raw amino-acid sequence, 212 residues long: Pyridoxine/pyridoxamine 5'-phosphate oxidase (212 aa).

Substrate is bound by residues 8-11 (RREY) and K66. FMN contacts are provided by residues 61 to 66 (RIVLLK), 76 to 77 (FT), R82, K83, and Q105. Substrate-binding residues include Y123, R127, and S131. FMN-binding positions include 140–141 (QS) and W185. 191-193 (RLH) lines the substrate pocket. FMN is bound at residue R195.

Belongs to the pyridoxamine 5'-phosphate oxidase family. As to quaternary structure, homodimer. Requires FMN as cofactor.

The catalysed reaction is pyridoxamine 5'-phosphate + O2 + H2O = pyridoxal 5'-phosphate + H2O2 + NH4(+). The enzyme catalyses pyridoxine 5'-phosphate + O2 = pyridoxal 5'-phosphate + H2O2. Its pathway is cofactor metabolism; pyridoxal 5'-phosphate salvage; pyridoxal 5'-phosphate from pyridoxamine 5'-phosphate: step 1/1. It functions in the pathway cofactor metabolism; pyridoxal 5'-phosphate salvage; pyridoxal 5'-phosphate from pyridoxine 5'-phosphate: step 1/1. In terms of biological role, catalyzes the oxidation of either pyridoxine 5'-phosphate (PNP) or pyridoxamine 5'-phosphate (PMP) into pyridoxal 5'-phosphate (PLP). The protein is Pyridoxine/pyridoxamine 5'-phosphate oxidase of Shewanella putrefaciens (strain CN-32 / ATCC BAA-453).